We begin with the raw amino-acid sequence, 261 residues long: DNA repair protein RecO (261 aa).

It belongs to the RecO family.

Its function is as follows. Involved in DNA repair and RecF pathway recombination. The chain is DNA repair protein RecO from Mycobacteroides abscessus (strain ATCC 19977 / DSM 44196 / CCUG 20993 / CIP 104536 / JCM 13569 / NCTC 13031 / TMC 1543 / L948) (Mycobacterium abscessus).